We begin with the raw amino-acid sequence, 311 residues long: Homoserine O-acetyltransferase (311 aa).

C142 serves as the catalytic Acyl-thioester intermediate. Residues K163 and S192 each contribute to the substrate site. Catalysis depends on H235, which acts as the Proton acceptor. The active site involves E237. Substrate is bound at residue R249.

Belongs to the MetA family.

It localises to the cytoplasm. It catalyses the reaction L-homoserine + acetyl-CoA = O-acetyl-L-homoserine + CoA. Its pathway is amino-acid biosynthesis; L-methionine biosynthesis via de novo pathway; O-acetyl-L-homoserine from L-homoserine: step 1/1. Transfers an acetyl group from acetyl-CoA to L-homoserine, forming acetyl-L-homoserine. In Lysinibacillus sphaericus (strain C3-41), this protein is Homoserine O-acetyltransferase.